The primary structure comprises 512 residues: D-alanine--D-alanyl carrier protein ligase (512 aa).

Residue 152–153 (TS) participates in ATP binding. Asp-199 is a binding site for D-alanine. An ATP-binding site is contributed by 294–299 (NAYGPT). A D-alanine-binding site is contributed by Val-303. Residues Asp-385, 397 to 400 (YGGR), and Lys-499 each bind ATP. D-alanine is bound at residue Lys-499.

Belongs to the ATP-dependent AMP-binding enzyme family. DltA subfamily.

It localises to the cytoplasm. It catalyses the reaction holo-[D-alanyl-carrier protein] + D-alanine + ATP = D-alanyl-[D-alanyl-carrier protein] + AMP + diphosphate. It functions in the pathway cell wall biogenesis; lipoteichoic acid biosynthesis. Its function is as follows. Catalyzes the first step in the D-alanylation of lipoteichoic acid (LTA), the activation of D-alanine and its transfer onto the D-alanyl carrier protein (Dcp) DltC. In an ATP-dependent two-step reaction, forms a high energy D-alanyl-AMP intermediate, followed by transfer of the D-alanyl residue as a thiol ester to the phosphopantheinyl prosthetic group of the Dcp. D-alanylation of LTA plays an important role in modulating the properties of the cell wall in Gram-positive bacteria, influencing the net charge of the cell wall. This Streptococcus pyogenes serotype M49 (strain NZ131) protein is D-alanine--D-alanyl carrier protein ligase.